We begin with the raw amino-acid sequence, 194 residues long: Putative manganese efflux pump MntP (194 aa).

Helical transmembrane passes span 3–23 (PFSIVLIGFAMSTDAFAAAIG), 37–57 (LRAGLIFGCIEAITPVIGWLL), 69–89 (DHWIAFVLLGALGTHMIVAGL), 110–132 (LGLATTGFATSIDAMAVGVSLAF), 147–167 (CTFSMVTAGVMLGRALGNLIG), and 172–192 (MLGGLILVIVGSVILYEHLSG).

This sequence belongs to the MntP (TC 9.B.29) family.

It is found in the cell inner membrane. Functionally, probably functions as a manganese efflux pump. This Xanthomonas euvesicatoria pv. vesicatoria (strain 85-10) (Xanthomonas campestris pv. vesicatoria) protein is Putative manganese efflux pump MntP.